The chain runs to 321 residues: MMAVTNGVIHASSREPLFSFGVIADVQYADIPDGRSFLGVPRYYRHSISVLQRAVSTWNKQHNIKFSINFGDIIDGYCPKDKSLWAVQKVLDEFEKFDGPTYHMFGNHCLYNLPRGKLVSLLKMPTDSDRAYYDFSPCPEYRFVVLDAYDFSALGWPRDHPVTAEAMKFLEEKNPNSDKNSPDGLVGVDRRFVMFNGGVGKEQLSWLNDVLQDASARRQNVILCSHLPMDPGSASFAALMWNYDEVMAIVRQYKCVKACFAGHDHKGGHSVDSHGVHHRTLEAALECPPGTSAFGHIEVYPDKLLLVGSDKMADTEMCFEP.

Zn(2+) contacts are provided by Asp-25, Gln-27, Asp-72, Asn-107, His-226, His-263, and His-265.

Belongs to the ADPRibase-Mn family. Monomer. The cofactor is Mg(2+).

It catalyses the reaction CDP-choline + H2O = phosphocholine + CMP + 2 H(+). It carries out the reaction ADP-D-ribose + H2O = D-ribose 5-phosphate + AMP + 2 H(+). The catalysed reaction is CDP-glycerol + H2O = sn-glycerol 3-phosphate + CMP + 2 H(+). In terms of biological role, hydrolyzes ADP-ribose, IDP-ribose, CDP-glycerol, CDP-choline and CDP-ethanolamine, but not other non-reducing ADP-sugars or CDP-glucose. This chain is Manganese-dependent ADP-ribose/CDP-alcohol diphosphatase, found in Oryza sativa subsp. japonica (Rice).